The chain runs to 309 residues: Probable MRF1 mitochondrial N(5)-glutamine methyltransferase mtq1 (309 aa).

S-adenosyl-L-methionine contacts are provided by residues 124-128 (CTGSG), D148, and N200. 200–203 (NPPY) lines the substrate pocket.

This sequence belongs to the protein N5-glutamine methyltransferase family.

The protein localises to the mitochondrion. It carries out the reaction L-glutaminyl-[peptide chain release factor] + S-adenosyl-L-methionine = N(5)-methyl-L-glutaminyl-[peptide chain release factor] + S-adenosyl-L-homocysteine + H(+). In terms of biological role, methylates MRF1 on 'Gln-270' using S-adenosyl L-methionine as methyl donor. The polypeptide is Probable MRF1 mitochondrial N(5)-glutamine methyltransferase mtq1 (mtq1) (Schizosaccharomyces pombe (strain 972 / ATCC 24843) (Fission yeast)).